A 283-amino-acid polypeptide reads, in one-letter code: Phosphatidylserine decarboxylase proenzyme (283 aa).

Residues aspartate 96, histidine 152, and serine 250 each act as charge relay system; for autoendoproteolytic cleavage activity in the active site. Serine 250 (schiff-base intermediate with substrate; via pyruvic acid; for decarboxylase activity) is an active-site residue. The residue at position 250 (serine 250) is a Pyruvic acid (Ser); by autocatalysis.

The protein belongs to the phosphatidylserine decarboxylase family. PSD-B subfamily. Prokaryotic type I sub-subfamily. As to quaternary structure, heterodimer of a large membrane-associated beta subunit and a small pyruvoyl-containing alpha subunit. Pyruvate serves as cofactor. Is synthesized initially as an inactive proenzyme. Formation of the active enzyme involves a self-maturation process in which the active site pyruvoyl group is generated from an internal serine residue via an autocatalytic post-translational modification. Two non-identical subunits are generated from the proenzyme in this reaction, and the pyruvate is formed at the N-terminus of the alpha chain, which is derived from the carboxyl end of the proenzyme. The autoendoproteolytic cleavage occurs by a canonical serine protease mechanism, in which the side chain hydroxyl group of the serine supplies its oxygen atom to form the C-terminus of the beta chain, while the remainder of the serine residue undergoes an oxidative deamination to produce ammonia and the pyruvoyl prosthetic group on the alpha chain. During this reaction, the Ser that is part of the protease active site of the proenzyme becomes the pyruvoyl prosthetic group, which constitutes an essential element of the active site of the mature decarboxylase.

Its subcellular location is the cell membrane. The catalysed reaction is a 1,2-diacyl-sn-glycero-3-phospho-L-serine + H(+) = a 1,2-diacyl-sn-glycero-3-phosphoethanolamine + CO2. Its pathway is phospholipid metabolism; phosphatidylethanolamine biosynthesis; phosphatidylethanolamine from CDP-diacylglycerol: step 2/2. Its function is as follows. Catalyzes the formation of phosphatidylethanolamine (PtdEtn) from phosphatidylserine (PtdSer). This Acinetobacter baumannii (strain ACICU) protein is Phosphatidylserine decarboxylase proenzyme.